Here is a 453-residue protein sequence, read N- to C-terminus: MTTDTIVAQATAPGRGGVGIIRISGDKATDVAMAVLGHLPKTRYADYCDFKNATGQVIDQGIALFFKGPNSFTGEDVLELQGHGGQIVLDMLIKRVLEVEGIRIAKPGEFSEQAFMNDKLDLTQAEAIADLIDATSEQAAKSALQSLQGEFSKEVHELVDQVTNLRLYVEAAIDFPDEEVDFLSDGKIANALYKIIDKLSTVQASAKQGSIIREGMKVVIAGRPNAGKSSLLNALAGKESAIVTEIAGTTRDVLREHIHLDGMPLHIIDTAGLRDTTDTVEQIGIERAWNEINSADRVLFMVDGTTTDAVDPHDIWPDFINRLPANLGVTVIRNKADLTGENLDMTEEKGYSVYRISAKTGLGVDELKLHLKSLMGYQSNLEGGFIARRRHLEALDVAASHLQLGKEQLEVYLAGELLAEELRMAQLALSEITGRFTSDDLLGKIFSSFCIGK.

(6S)-5-formyl-5,6,7,8-tetrahydrofolate contacts are provided by arginine 22, glutamate 79, and lysine 119. Residues 215 to 376 form the TrmE-type G domain; the sequence is GMKVVIAGRP…LKLHLKSLMG (162 aa). Asparagine 225 is a K(+) binding site. GTP contacts are provided by residues 225–230, 244–250, 269–272, and 334–337; these read NAGKSS, TEIAGTT, DTAG, and NKAD. Serine 229 serves as a coordination point for Mg(2+). K(+)-binding residues include threonine 244, isoleucine 246, and threonine 249. Threonine 250 is a binding site for Mg(2+). Lysine 453 serves as a coordination point for (6S)-5-formyl-5,6,7,8-tetrahydrofolate.

Belongs to the TRAFAC class TrmE-Era-EngA-EngB-Septin-like GTPase superfamily. TrmE GTPase family. Homodimer. Heterotetramer of two MnmE and two MnmG subunits. The cofactor is K(+).

The protein resides in the cytoplasm. Exhibits a very high intrinsic GTPase hydrolysis rate. Involved in the addition of a carboxymethylaminomethyl (cmnm) group at the wobble position (U34) of certain tRNAs, forming tRNA-cmnm(5)s(2)U34. In Shewanella putrefaciens (strain CN-32 / ATCC BAA-453), this protein is tRNA modification GTPase MnmE.